A 301-amino-acid polypeptide reads, in one-letter code: Glutathione transport system permease protein GsiD (301 aa).

6 helical membrane passes run 37-57 (VAVA…WAQY), 103-123 (LAAG…LGLL), 141-161 (VLFA…MGSG), 162-182 (MANV…RLVR), 220-240 (IVVF…SLSF), and 264-284 (VIAP…VLAF). The region spanning 99–288 (TRISLAAGIF…LTVLAFNLLG (190 aa)) is the ABC transmembrane type-1 domain.

Belongs to the binding-protein-dependent transport system permease family. The complex is composed of two ATP-binding proteins (GsiA), two transmembrane proteins (GsiC and GsiD) and a solute-binding protein (GsiB).

The protein localises to the cell inner membrane. Its function is as follows. Part of the ABC transporter complex GsiABCD involved in glutathione import. Probably responsible for the translocation of the substrate across the membrane. The protein is Glutathione transport system permease protein GsiD of Pectobacterium atrosepticum (strain SCRI 1043 / ATCC BAA-672) (Erwinia carotovora subsp. atroseptica).